The chain runs to 280 residues: Hydroxyacyl-thioester dehydratase type 2, mitochondrial (280 aa).

It belongs to the HTD2 family.

Its subcellular location is the mitochondrion. In terms of biological role, mitochondrial 3-hydroxyacyl-thioester dehydratase involved in fatty acid biosynthesis. Required for respiratory growth and for normal mitochondrial morphology. In Saccharomyces cerevisiae (strain ATCC 204508 / S288c) (Baker's yeast), this protein is Hydroxyacyl-thioester dehydratase type 2, mitochondrial (HTD2).